The chain runs to 83 residues: Small ribosomal subunit protein uS17 (83 aa).

This sequence belongs to the universal ribosomal protein uS17 family. In terms of assembly, part of the 30S ribosomal subunit.

Functionally, one of the primary rRNA binding proteins, it binds specifically to the 5'-end of 16S ribosomal RNA. This chain is Small ribosomal subunit protein uS17, found in Ehrlichia chaffeensis (strain ATCC CRL-10679 / Arkansas).